A 399-amino-acid chain; its full sequence is MDNCVNSFEDQKDDLVHKKKSQNFGYVCGSINLGTNVIAQSPTKPLNFFHSSRWSPDGSTILSLTEDQCLNCWNVPFSDLSKKADGPLNFSKHLSYKYQSPETVYSYSWYSRMKLDDPSSNLFAVSSRDQPIKLINFTTGKNKASYHMIDHQERYQGSHCLQFTNDGEYLIAGDKNCLHHFNIRTGCKEPVMTTVTHGYKVPLWEFSLKGIQSCFSLNPMDSKTLAVGTYSNRVGIYNDCGRRPCQLEFSIERGNGVTHLQWCEDGEKLYVGSRCSDKIEVWDIRYVRDMVYALEGHRGDTNQRILFDTDKKDEILAGGTDGSIRRWRNKDLVEETHVTGNYDLTVNTVQANPINMQIKCVCYGNRIYKYEKDESEEEDESKEKDLWTGTVSALQVWMD.

WD repeat units lie at residues 44–83 (KPLNFFHSSRWSPDGSTILSLTEDQCLNCWNVPFSDLSKK), 105–145 (YSYS…NKAS), 150–194 (DHQE…VMTT), 207–247 (SLKG…PCQL), 252–292 (ERGN…DMVY), and 296–337 (GHRG…EETH).

Interacts with gpa1.

The protein localises to the cytoplasm. In terms of biological role, negatively regulates the pheromone-response pathway. Acts as a structural mimic of the G protein beta subunit thereby interacting with gpa1 which then inhibits gpa1 signaling. This is Guanine nucleotide-binding protein negative regulator 1 (gnr1) from Schizosaccharomyces pombe (strain 972 / ATCC 24843) (Fission yeast).